The primary structure comprises 230 residues: Porin OmpL (230 aa).

A signal peptide spans 1–20 (MKNINAIILLSSLTSASVFA).

Belongs to the oligogalacturonate-specific porin KdgM (TC 1.B.35) family. OmpL subfamily.

The protein localises to the cell outer membrane. Its function is as follows. Outer membrane channel protein that allows an efficient diffusion of low-molecular-weight solutes such as small sugars and tetraglycine. However, the specific substrate recognized by the OmpL channel is unknown. This chain is Porin OmpL (ompL), found in Escherichia coli O157:H7.